We begin with the raw amino-acid sequence, 269 residues long: Formamidopyrimidine-DNA glycosylase (269 aa).

Proline 2 acts as the Schiff-base intermediate with DNA in catalysis. The active-site Proton donor is glutamate 3. Lysine 57 functions as the Proton donor; for beta-elimination activity in the catalytic mechanism. The DNA site is built by histidine 90, arginine 109, and lysine 150. The FPG-type zinc finger occupies 235-269 (QVYGRKGEPCRVCGTPIVATKHAQRATFYCRQCQK). The active-site Proton donor; for delta-elimination activity is arginine 259.

Belongs to the FPG family. In terms of assembly, monomer. Zn(2+) is required as a cofactor.

The enzyme catalyses Hydrolysis of DNA containing ring-opened 7-methylguanine residues, releasing 2,6-diamino-4-hydroxy-5-(N-methyl)formamidopyrimidine.. The catalysed reaction is 2'-deoxyribonucleotide-(2'-deoxyribose 5'-phosphate)-2'-deoxyribonucleotide-DNA = a 3'-end 2'-deoxyribonucleotide-(2,3-dehydro-2,3-deoxyribose 5'-phosphate)-DNA + a 5'-end 5'-phospho-2'-deoxyribonucleoside-DNA + H(+). Functionally, involved in base excision repair of DNA damaged by oxidation or by mutagenic agents. Acts as a DNA glycosylase that recognizes and removes damaged bases. Has a preference for oxidized purines, such as 7,8-dihydro-8-oxoguanine (8-oxoG). Has AP (apurinic/apyrimidinic) lyase activity and introduces nicks in the DNA strand. Cleaves the DNA backbone by beta-delta elimination to generate a single-strand break at the site of the removed base with both 3'- and 5'-phosphates. In Escherichia coli O6:K15:H31 (strain 536 / UPEC), this protein is Formamidopyrimidine-DNA glycosylase.